The chain runs to 308 residues: Elongation factor Ts (308 aa).

The interval 80–83 is involved in Mg(2+) ion dislocation from EF-Tu; sequence TDFV.

The protein belongs to the EF-Ts family.

It localises to the cytoplasm. Its function is as follows. Associates with the EF-Tu.GDP complex and induces the exchange of GDP to GTP. It remains bound to the aminoacyl-tRNA.EF-Tu.GTP complex up to the GTP hydrolysis stage on the ribosome. The polypeptide is Elongation factor Ts (Rhizobium etli (strain CIAT 652)).